We begin with the raw amino-acid sequence, 258 residues long: SufE-like protein 2, chloroplastic (258 aa).

Residues 1–32 (MNTSSSFKALASPPLISTSRPTTKSFPNPRFT) are disordered. Polar residues predominate over residues 15–32 (LISTSRPTTKSFPNPRFT). The active-site Cysteine persulfide intermediate is C122.

The protein belongs to the SufE family. As to expression, highly expressed in flowers and pollen, and at low levels in roots, leaves and stems.

The protein resides in the plastid. The protein localises to the chloroplast. It functions in the pathway cofactor biosynthesis; iron-sulfur cluster biosynthesis. Participates in cysteine desulfurization mediated by NFS2. Can activate the cysteine desulfurase activity of NFS2 in vitro. Cysteine desulfurization mobilizes sulfur from L-cysteine to yield L-alanine and supplies the inorganic sulfur for iron-sulfur (Fe-S) cluster formation. This chain is SufE-like protein 2, chloroplastic (SUFE2), found in Arabidopsis thaliana (Mouse-ear cress).